We begin with the raw amino-acid sequence, 796 residues long: Lon protease 2 (796 aa).

Residues 9 to 206 enclose the Lon N-terminal domain; it reads LPIVILKENV…KLIVNLSIEI (198 aa). 352–359 is a binding site for ATP; that stretch reads GPPGIGKT. The 180-residue stretch at 617 to 796 folds into the Lon proteolytic domain; that stretch reads IDSSGFVYGL…EEVFDYLNII (180 aa). Active-site residues include S702 and K745.

Belongs to the peptidase S16 family. In terms of assembly, homohexamer. Organized in a ring with a central cavity.

The protein resides in the cytoplasm. The enzyme catalyses Hydrolysis of proteins in presence of ATP.. Its function is as follows. ATP-dependent serine protease that mediates the selective degradation of mutant and abnormal proteins as well as certain short-lived regulatory proteins. Required for cellular homeostasis and for survival from DNA damage and developmental changes induced by stress. Degrades polypeptides processively to yield small peptide fragments that are 5 to 10 amino acids long. Binds to DNA in a double-stranded, site-specific manner. The chain is Lon protease 2 (lon2) from Borreliella burgdorferi (strain ATCC 35210 / DSM 4680 / CIP 102532 / B31) (Borrelia burgdorferi).